The primary structure comprises 175 residues: Inorganic pyrophosphatase (175 aa).

Residues Lys-30, Arg-44, and Tyr-56 each contribute to the substrate site. Mg(2+)-binding residues include Asp-66, Asp-71, and Asp-103. A substrate-binding site is contributed by Tyr-142.

This sequence belongs to the PPase family. As to quaternary structure, homohexamer. Mg(2+) serves as cofactor.

It localises to the cytoplasm. The enzyme catalyses diphosphate + H2O = 2 phosphate + H(+). Catalyzes the hydrolysis of inorganic pyrophosphate (PPi) forming two phosphate ions. The chain is Inorganic pyrophosphatase from Yersinia pestis.